A 250-amino-acid chain; its full sequence is NAD-dependent protein deacetylase 2 (250 aa).

The 247-residue stretch at 4–250 (MDSKNLFKKA…LRNIWNLIKS (247 aa)) folds into the Deacetylase sirtuin-type domain. Positions 29, 33, 40, 41, 107, 109, 110, and 125 each coordinate NAD(+). Nicotinamide is bound at residue Phe-40. Nicotinamide contacts are provided by Ile-109 and Asp-110. His-125 acts as the Proton acceptor in catalysis. Cys-133, Cys-136, Cys-158, and Cys-161 together coordinate Zn(2+). NAD(+) contacts are provided by Ser-198, Ser-199, and Asn-219.

This sequence belongs to the sirtuin family. Class U subfamily. It depends on Zn(2+) as a cofactor.

The protein resides in the cytoplasm. The catalysed reaction is N(6)-acetyl-L-lysyl-[protein] + NAD(+) + H2O = 2''-O-acetyl-ADP-D-ribose + nicotinamide + L-lysyl-[protein]. NAD-dependent protein deacetylase which modulates the activities of several enzymes which are inactive in their acetylated form. This chain is NAD-dependent protein deacetylase 2, found in Caldanaerobacter subterraneus subsp. tengcongensis (strain DSM 15242 / JCM 11007 / NBRC 100824 / MB4) (Thermoanaerobacter tengcongensis).